A 547-amino-acid polypeptide reads, in one-letter code: Elongator complex protein 3 (547 aa).

In terms of domain architecture, Radical SAM core spans 82 to 372 (RTASGIAVVA…YRVQRDIPMP (291 aa)). [4Fe-4S] cluster is bound by residues Cys99, Cys109, and Cys112. At Ser161 the chain carries Phosphoserine. Lys164 lines the acetyl-CoA pocket. Lys229 carries the N6-methyllysine modification. The residue at position 251 (Tyr251) is a Phosphotyrosine. The region spanning 396-547 (IQCRDVRTRE…QGPYMVKMLK (152 aa)) is the N-acetyltransferase domain. Acetyl-CoA-binding positions include 474-477 (ELHV), 497-499 (FGM), and Tyr530.

This sequence belongs to the ELP3 family. As to quaternary structure, component of the elongator complex which consists of ELP1, ELP2, ELP3, ELP4, ELP5 and ELP6. ELP1, ELP2 and ELP3 form the elongator core complex. Interacts with alpha-tubulin. Requires [4Fe-4S] cluster as cofactor. Post-translationally, tyrosine-phosphorylated. Also serine/threonine-phosphorylated.

It is found in the cytoplasm. The protein resides in the nucleus. The enzyme catalyses uridine(34) in tRNA + acetyl-CoA + S-adenosyl-L-methionine + H2O = 5-(carboxymethyl)uridine(34) in tRNA + 5'-deoxyadenosine + L-methionine + CoA + 2 H(+). The protein operates within tRNA modification; 5-methoxycarbonylmethyl-2-thiouridine-tRNA biosynthesis. Functionally, catalytic tRNA acetyltransferase subunit of the elongator complex which is required for multiple tRNA modifications, including mcm5U (5-methoxycarbonylmethyl uridine), mcm5s2U (5-methoxycarbonylmethyl-2-thiouridine), and ncm5U (5-carbamoylmethyl uridine). In the elongator complex, acts as a tRNA uridine(34) acetyltransferase by mediating formation of carboxymethyluridine in the wobble base at position 34 in tRNAs. May also act as a protein lysine acetyltransferase by mediating acetylation of target proteins; such activity is however unclear in vivo and recent evidences suggest that ELP3 primarily acts as a tRNA acetyltransferase. Involved in neurogenesis: regulates the migration and branching of projection neurons in the developing cerebral cortex, through a process depending on alpha-tubulin acetylation. Required for acetylation of GJA1 in the developing cerebral cortex. This is Elongator complex protein 3 from Mus musculus (Mouse).